An 80-amino-acid chain; its full sequence is U20-ctenitoxin-Pn1a (80 aa).

7 disulfide bridges follow: Cys-3-Cys-20, Cys-10-Cys-26, Cys-17-Cys-52, Cys-19-Cys-40, Cys-28-Cys-38, Cys-58-Cys-71, and Cys-75-Cys-80.

In terms of tissue distribution, expressed by the venom gland.

Its subcellular location is the secreted. Functionally, omega-agatoxin are antagonists of voltage-gated calcium channels (Cav). Induces rapid general flaccid paralysis followed by death when injected into the cerebral ventricle of mice at dose levels of 3 ug per mouse. The protein is U20-ctenitoxin-Pn1a of Phoneutria nigriventer (Brazilian armed spider).